The primary structure comprises 581 residues: Ezrin (581 aa).

Positions 2–295 constitute an FERM domain; that stretch reads PKPINVRVTT…GNHELYMRRR (294 aa). At Lys60 the chain carries N6-acetyllysine. Positions 115-120 match the [IL]-x-C-x-x-[DE] motif motif; sequence IYCPPE. Tyr146 carries the phosphotyrosine; by PDGFR modification. The segment at 244–581 is interaction with SCYL3; that stretch reads EIRNISFNDK…KQRIDEFEAM (338 aa). Residues 302-462 adopt a coiled-coil conformation; the sequence is VQQMKAQARE…QDDLVKTREE (161 aa). The interval 306 to 341 is disordered; sequence KAQAREEKHQKQLERQQLETEKKRRETVEREKEQMM. Basic and acidic residues predominate over residues 308–341; the sequence is QAREEKHQKQLERQQLETEKKRRETVEREKEQMM. Tyr354 is modified (phosphotyrosine; by PDGFR). At Ser366 the chain carries Phosphoserine. Tyr476 carries the post-translational modification Phosphotyrosine. The segment at 534–560 is disordered; the sequence is SQARDENKRTHNDIIHNENMRQGRDKY. The segment covering 535–560 has biased composition (basic and acidic residues); it reads QARDENKRTHNDIIHNENMRQGRDKY. The residue at position 562 (Thr562) is a Phosphothreonine; by ROCK2 and PKC/PRKCI.

Interacts with PALS1 and NHERF2. Found in a complex with EZR, PODXL and NHERF2. Interacts with MCC, PLEKHG6, PODXL, SCYL3/PACE1, NHERF1 and TMEM8B. Interacts (when phosphorylated) with FES/FPS. Interacts with dimeric S100P, the interaction may be activating through unmasking of F-actin binding sites. Identified in complexes that contain VIM, EZR, AHNAK, BFSP1, BFSP2, ANK2, PLEC, PRX and spectrin. Detected in a complex composed of at least EZR, AHNAK, PPL and PRX. Interacts with PDPN (via cytoplasmic domain); activates RHOA and promotes epithelial-mesenchymal transition. Interacts with SPN/CD43 cytoplasmic tail, CD44 and ICAM2. Interacts with SLC9A3; interaction targets SLC9A3 to the apical membrane. Interacts with SLC9A1; regulates interactions of SLC9A1 with cytoskeletal and promotes stress fiber formation. Interacts with CLIC5; may work together in a complex which also includes RDX and MYO6 to stabilize linkages between the plasma membrane and subjacent actin cytoskeleton at the base of stereocilia. Post-translationally, phosphorylated by tyrosine-protein kinases. Phosphorylation by ROCK2 suppresses the head-to-tail association of the N-terminal and C-terminal halves resulting in an opened conformation which is capable of actin and membrane-binding. S-nitrosylation is induced by interferon-gamma and oxidatively-modified low-densitity lipoprotein (LDL(ox)) possibly implicating the iNOS-S100A8/9 transnitrosylase complex. Detected in eye lens fiber cells (at protein level).

The protein localises to the apical cell membrane. The protein resides in the cell projection. It localises to the microvillus membrane. Its subcellular location is the ruffle membrane. It is found in the cytoplasm. The protein localises to the cell cortex. The protein resides in the cytoskeleton. It localises to the microvillus. With respect to regulation, a head-to-tail association, of the N-terminal and C-terminal halves results in a closed conformation (inactive form) which is incapable of actin or membrane-binding. Functionally, probably involved in connections of major cytoskeletal structures to the plasma membrane. In epithelial cells, required for the formation of microvilli and membrane ruffles on the apical pole. Along with PLEKHG6, required for normal macropinocytosis. In Bos taurus (Bovine), this protein is Ezrin (EZR).